The following is a 139-amino-acid chain: uncharacterized protein (139 aa).

This sequence to S.typhimurium FliF.

Functionally, may be involved in the assembly, structure, or function of the flagellum. May polymerize to form a filamentous structure that is part of the flagellum. This is an uncharacterized protein from Bacillus subtilis (strain 168).